The sequence spans 428 residues: Methyl-branched lipid omega-hydroxylase (428 aa).

Position 379 (Cys-379) interacts with heme.

This sequence belongs to the cytochrome P450 family. Requires heme as cofactor.

It catalyses the reaction a methyl-branched lipid + O2 + 2 reduced ferredoxin [iron-sulfur] cluster + 2 H(+) = an omega-hydroxy-methyl-branched lipid + H2O + 2 oxidized ferredoxin [iron-sulfur] cluster.. It carries out the reaction cholest-4-en-3-one + 6 reduced [2Fe-2S]-[ferredoxin] + 3 O2 + 5 H(+) = (25R)-3-oxocholest-4-en-26-oate + 6 oxidized [2Fe-2S]-[ferredoxin] + 4 H2O. The protein operates within lipid metabolism; branched-chain fatty acid metabolism. In terms of biological role, primarily hydroxylates the omega-carbon of a number of methyl-branched lipids, including (2E,6E)-farnesol, phytanate, geranylgeraniol, 15-methylpalmitate and (2E,6E)-farnesyl diphosphate. Also catalyzes the sequential oxidation of the terminal methyl of cholest-4-en-3-one into (25R)-26-hydroxycholest-4-en-3-one (alcohol), (25R)-26-oxocholest-4-en-3-one (aldehyde), to finally yield the carboxylic acid (25R)-3-oxocholest-4-en-26-oate. Also able to sequentially oxidize cholesterol itself, not only cholest-4-en-3-one. In Mycobacterium bovis (strain ATCC BAA-935 / AF2122/97), this protein is Methyl-branched lipid omega-hydroxylase (cyp124).